We begin with the raw amino-acid sequence, 156 residues long: Small ribosomal subunit protein uS7 (156 aa).

The protein belongs to the universal ribosomal protein uS7 family. Part of the 30S ribosomal subunit. Contacts proteins S9 and S11.

Functionally, one of the primary rRNA binding proteins, it binds directly to 16S rRNA where it nucleates assembly of the head domain of the 30S subunit. Is located at the subunit interface close to the decoding center, probably blocks exit of the E-site tRNA. The chain is Small ribosomal subunit protein uS7 from Synechococcus sp. (strain CC9902).